We begin with the raw amino-acid sequence, 102 residues long: NADH-quinone oxidoreductase subunit K 2 (102 aa).

A run of 3 helical transmembrane segments spans residues 5-25 (FEHV…CVLV), 30-50 (LIML…AFVG), and 65-85 (LIIM…VVYL).

It belongs to the complex I subunit 4L family. As to quaternary structure, NDH-1 is composed of 14 different subunits. Subunits NuoA, H, J, K, L, M, N constitute the membrane sector of the complex.

It localises to the cell inner membrane. It catalyses the reaction a quinone + NADH + 5 H(+)(in) = a quinol + NAD(+) + 4 H(+)(out). In terms of biological role, NDH-1 shuttles electrons from NADH, via FMN and iron-sulfur (Fe-S) centers, to quinones in the respiratory chain. The immediate electron acceptor for the enzyme in this species is believed to be ubiquinone. Couples the redox reaction to proton translocation (for every two electrons transferred, four hydrogen ions are translocated across the cytoplasmic membrane), and thus conserves the redox energy in a proton gradient. The chain is NADH-quinone oxidoreductase subunit K 2 from Geobacter sulfurreducens (strain ATCC 51573 / DSM 12127 / PCA).